Consider the following 423-residue polypeptide: Putative competence-damage inducible protein (423 aa).

It belongs to the CinA family.

The protein is Putative competence-damage inducible protein of Streptococcus pyogenes serotype M1.